We begin with the raw amino-acid sequence, 293 residues long: 4-hydroxy-tetrahydrodipicolinate synthase (293 aa).

Residue serine 45 coordinates pyruvate. Tyrosine 133 (proton donor/acceptor) is an active-site residue. Lysine 161 functions as the Schiff-base intermediate with substrate in the catalytic mechanism. Isoleucine 203 serves as a coordination point for pyruvate.

This sequence belongs to the DapA family. As to quaternary structure, homotetramer; dimer of dimers.

The protein resides in the cytoplasm. The enzyme catalyses L-aspartate 4-semialdehyde + pyruvate = (2S,4S)-4-hydroxy-2,3,4,5-tetrahydrodipicolinate + H2O + H(+). The protein operates within amino-acid biosynthesis; L-lysine biosynthesis via DAP pathway; (S)-tetrahydrodipicolinate from L-aspartate: step 3/4. Catalyzes the condensation of (S)-aspartate-beta-semialdehyde [(S)-ASA] and pyruvate to 4-hydroxy-tetrahydrodipicolinate (HTPA). The chain is 4-hydroxy-tetrahydrodipicolinate synthase from Psychromonas ingrahamii (strain DSM 17664 / CCUG 51855 / 37).